Reading from the N-terminus, the 844-residue chain is Translation elongation factor 2 (844 aa).

Positions 17-348 constitute a tr-type G domain; that stretch reads RNIRNMSVIA…MIAIHLPSPV (332 aa). GTP is bound at residue 26–33; sequence AHVDHGKS. Phosphothreonine occurs at positions 57 and 59. GTP is bound by residues 162–165 and 219–221; these read NKMD and SGL. Ser488 carries the post-translational modification Phosphoserine. His701 is subject to Diphthamide.

Belongs to the TRAFAC class translation factor GTPase superfamily. Classic translation factor GTPase family. EF-G/EF-2 subfamily. Phosphorylation by EF-2 kinase completely inactivates EF-2.

The protein localises to the cytoplasm. It carries out the reaction GTP + H2O = GDP + phosphate + H(+). Its function is as follows. Catalyzes the GTP-dependent ribosomal translocation step during translation elongation. During this step, the ribosome changes from the pre-translocational (PRE) to the post-translocational (POST) state as the newly formed A-site-bound peptidyl-tRNA and P-site-bound deacylated tRNA move to the P and E sites, respectively. Catalyzes the coordinated movement of the two tRNA molecules, the mRNA and conformational changes in the ribosome. This is Translation elongation factor 2 from Bombyx mori (Silk moth).